The sequence spans 201 residues: LexA repressor (201 aa).

Residues 27 to 47 (RMEISSAFGFASPNAAEDHLK) constitute a DNA-binding region (H-T-H motif). Residues Ser-116 and Lys-153 each act as for autocatalytic cleavage activity in the active site.

Belongs to the peptidase S24 family. In terms of assembly, homodimer.

The catalysed reaction is Hydrolysis of Ala-|-Gly bond in repressor LexA.. Its function is as follows. Represses a number of genes involved in the response to DNA damage (SOS response), including recA and lexA. In the presence of single-stranded DNA, RecA interacts with LexA causing an autocatalytic cleavage which disrupts the DNA-binding part of LexA, leading to derepression of the SOS regulon and eventually DNA repair. In Dechloromonas aromatica (strain RCB), this protein is LexA repressor.